Reading from the N-terminus, the 229-residue chain is Uracil-DNA glycosylase (229 aa).

The Proton acceptor role is filled by Asp70.

This sequence belongs to the uracil-DNA glycosylase (UDG) superfamily. UNG family.

The protein resides in the cytoplasm. The enzyme catalyses Hydrolyzes single-stranded DNA or mismatched double-stranded DNA and polynucleotides, releasing free uracil.. Its function is as follows. Excises uracil residues from the DNA which can arise as a result of misincorporation of dUMP residues by DNA polymerase or due to deamination of cytosine. The polypeptide is Uracil-DNA glycosylase (Chlamydia trachomatis serovar L2b (strain UCH-1/proctitis)).